We begin with the raw amino-acid sequence, 272 residues long: Putative pyruvate, phosphate dikinase regulatory protein 1 (272 aa).

151 to 158 (GISRTSKT) is a binding site for ADP.

The protein belongs to the pyruvate, phosphate/water dikinase regulatory protein family. PDRP subfamily.

It carries out the reaction N(tele)-phospho-L-histidyl/L-threonyl-[pyruvate, phosphate dikinase] + ADP = N(tele)-phospho-L-histidyl/O-phospho-L-threonyl-[pyruvate, phosphate dikinase] + AMP + H(+). The catalysed reaction is N(tele)-phospho-L-histidyl/O-phospho-L-threonyl-[pyruvate, phosphate dikinase] + phosphate + H(+) = N(tele)-phospho-L-histidyl/L-threonyl-[pyruvate, phosphate dikinase] + diphosphate. In terms of biological role, bifunctional serine/threonine kinase and phosphorylase involved in the regulation of the pyruvate, phosphate dikinase (PPDK) by catalyzing its phosphorylation/dephosphorylation. This Staphylococcus epidermidis (strain ATCC 35984 / DSM 28319 / BCRC 17069 / CCUG 31568 / BM 3577 / RP62A) protein is Putative pyruvate, phosphate dikinase regulatory protein 1.